The following is a 314-amino-acid chain: Homoserine kinase (314 aa).

Residue 96–106 participates in ATP binding; that stretch reads PIGSGLGSSAC.

The protein belongs to the GHMP kinase family. Homoserine kinase subfamily.

It localises to the cytoplasm. It carries out the reaction L-homoserine + ATP = O-phospho-L-homoserine + ADP + H(+). It functions in the pathway amino-acid biosynthesis; L-threonine biosynthesis; L-threonine from L-aspartate: step 4/5. Catalyzes the ATP-dependent phosphorylation of L-homoserine to L-homoserine phosphate. The polypeptide is Homoserine kinase (Mannheimia succiniciproducens (strain KCTC 0769BP / MBEL55E)).